The primary structure comprises 427 residues: MAKINELLRESTTTNSNSIGRPNLVALTRATTKLIYSDIVATQRTNQPVAAFYGIKYLNPDNEFTFKTGATYAGEAGYVDREQITELTEESKLTLNKGDLFKYNNIVYKVLEDTPFADIEESDLELALQIAIVLLKVRLFSDAASTSKFESSDSEIADARFQINKWQTAVKSRKLKTGITVELAQDLEANGFDAPNFLEDLLATEMADEINKDILQSLITVSKRYKVTGITDTGFIDLSYASAPEAGRSLYRMVCEMVSHIQKESTYTATFCVASARAAAILAASGWLKHKPEDDKYLSQNAYGFLANGLPLYCDTNSPLDYVIVGVVENIGEKEIVGSIFYAPYTEGLDLDDPEHVGAFKVVVDPESLQPSIGLLVRYALSANPYTVAKDEKEARVIDGGDMDKMAGRSDLSVLLGVKLPKIIIDE.

This sequence belongs to the Tevenvirinae capsid vertex family. Homopentamer. Interacts with the portal protein. Interacts with the major capsid protein that forms hexamers. Proteolytic cleavage at the N-terminus by the prohead core protein protease gives rise to the mature capsid vertex protein.

It localises to the virion. Its function is as follows. Capsid protein that self-associates to form pentons, building the capsid in association with hexamers of the major capsid protein and one dodecamer of the portal protein. The capsid vertex protein self-associates to form 11 pentons, building the T=13 laevo capsid in association with 160 hexamers of the major capsid protein. This is Capsid vertex protein from Escherichia coli O157:H7 (Bacteriophage AR1).